A 104-amino-acid polypeptide reads, in one-letter code: uncharacterized protein (104 aa).

The disordered stretch occupies residues 51 to 70 (NPGRSLDNNKDVSDKGRSEF). A compositionally biased stretch (basic and acidic residues) spans 57–70 (DNNKDVSDKGRSEF).

This sequence belongs to the protein-tyrosine phosphatase family.

This is an uncharacterized protein from Xanthomonas campestris pv. campestris (strain ATCC 33913 / DSM 3586 / NCPPB 528 / LMG 568 / P 25).